A 1715-amino-acid polypeptide reads, in one-letter code: Rho guanine nucleotide exchange factor TIAM2 (1715 aa).

Composition is skewed to polar residues over residues 1–22 (MGNS…TVTG) and 218–229 (GSPSSQRPSPTD). Disordered regions lie at residues 1–27 (MGNS…KQKP), 174–249 (FHNG…WYDS), 263–294 (SFLA…SSLS), and 385–418 (TGSL…NAEG). Glycine 2 carries N-myristoyl glycine lipidation. Positions 235-245 (SKGSSLSSESS) are enriched in low complexity. A compositionally biased stretch (basic and acidic residues) spans 395-411 (LQEPRSMEGSEYFDSHS). The PH 1 domain maps to 504-618 (VVRKAGWLFF…WVTAIHSACA (115 aa)). Positions 665–692 (PKNRKAIENQIRQWEQNLEKFHMDLFRM) form a coiled coil. The RBD domain maps to 831 to 902 (VQTYVHFQDN…YMQEQVYDEI (72 aa)). Residues 911–997 (DVQLTKTGDM…GLTLVARPVT (87 aa)) enclose the PDZ domain. Positions 1092-1113 (THTNSMEAPTESHDPPPRPLAR) are disordered. The DH domain maps to 1120–1314 (RLRKVIQELV…EKVASHINEM (195 aa)). The PH 2 domain maps to 1347–1478 (LLMHSTVSWL…KVIRSILREN (132 aa)). Positions 1515–1582 (SLKGLRTSSS…EGLAEFPDGL (68 aa)) are disordered. Residues 1522–1532 (SSSSEWPSEPS) show a composition bias toward low complexity. The span at 1533 to 1552 (KGNSLDSDECSLSSGTQSSG) shows a compositional bias: polar residues. A compositionally biased stretch (basic and acidic residues) spans 1557-1572 (ESRRDSKSTELEKDAQ). Serine 1604 carries the phosphoserine modification. Position 1662 is a phosphothreonine (threonine 1662).

The protein belongs to the TIAM family. Interacts with MAP1A, MAP1B, PARP1 and YWHAE. Interacts with CD44, PARD3 and MAPK8IP2. Post-translationally, phosphorylated on serine and threonine residues. Phosphorylated on Thr-1662 by Rho-kinase. Its phosphorylation by Rho-kinase inhibits its guanine nucleotide exchange activity, its interaction with MAP1A, MAP1B, PARP1 and YWHAE and reduces its ability to promote neurite growth. In terms of tissue distribution, expressed in fetal brain (at protein level). Expressed in the olfactory bulb, cortical plate of the cerebral cortex, caudate putamen, hippocampus, ependymal cells of the lateral surface of the lateral ventricles of the brain. Weakly expressed in heart, lung, liver, skeletal muscle, kidney and testis.

It localises to the cytoplasm. The protein resides in the cell projection. The protein localises to the lamellipodium. It is found in the filopodium. Its subcellular location is the growth cone. It localises to the neuron projection. The protein resides in the perikaryon. In terms of biological role, modulates the activity of RHO-like proteins and connects extracellular signals to cytoskeletal activities. Acts as a GDP-dissociation stimulator protein that stimulates the GDP-GTP exchange activity of RHO-like GTPases and activates them. Activates specifically RAC1, but not CDC42 and RHOA. Mediates extracellular laminin signals to activate Rac1, contributing to neurite growth. Involved in lamellipodial formation and advancement of the growth cone of embryonic hippocampal neurons. Promotes migration of neurons in the cerebral cortex. When overexpressed, induces membrane ruffling accompanied by the accumulation of actin filaments along the altered plasma membrane. This Mus musculus (Mouse) protein is Rho guanine nucleotide exchange factor TIAM2.